The sequence spans 243 residues: Adenosylcobinamide-GDP ribazoletransferase (243 aa).

A run of 7 helical transmembrane segments spans residues 8–28 (WLGAIAFYTCLPISPRWPIQL), 36–56 (PWVGLVLGGMLWGVQWLLDFL), 58–78 (VPSPVASAVLVALWLALTGGL), 107–127 (AGAFGVMAAMVILLLKVTSLS), 131–151 (KGSVLVWVLVLGRLAQVWAIA), 187–207 (FLLPLPLGQLLFGLLLILLIP), and 222–242 (YGAVVEWTEALLLVAFTVGSA).

This sequence belongs to the CobS family. Mg(2+) is required as a cofactor.

It localises to the cell inner membrane. It carries out the reaction alpha-ribazole + adenosylcob(III)inamide-GDP = adenosylcob(III)alamin + GMP + H(+). It catalyses the reaction alpha-ribazole 5'-phosphate + adenosylcob(III)inamide-GDP = adenosylcob(III)alamin 5'-phosphate + GMP + H(+). Its pathway is cofactor biosynthesis; adenosylcobalamin biosynthesis; adenosylcobalamin from cob(II)yrinate a,c-diamide: step 7/7. Its function is as follows. Joins adenosylcobinamide-GDP and alpha-ribazole to generate adenosylcobalamin (Ado-cobalamin). Also synthesizes adenosylcobalamin 5'-phosphate from adenosylcobinamide-GDP and alpha-ribazole 5'-phosphate. This chain is Adenosylcobinamide-GDP ribazoletransferase, found in Thermosynechococcus vestitus (strain NIES-2133 / IAM M-273 / BP-1).